The chain runs to 212 residues: dTTP/UTP pyrophosphatase (212 aa).

Residue Asp88 is the Proton acceptor of the active site.

It belongs to the Maf family. YhdE subfamily. A divalent metal cation serves as cofactor.

The protein localises to the cytoplasm. It catalyses the reaction dTTP + H2O = dTMP + diphosphate + H(+). The catalysed reaction is UTP + H2O = UMP + diphosphate + H(+). Functionally, nucleoside triphosphate pyrophosphatase that hydrolyzes dTTP and UTP. May have a dual role in cell division arrest and in preventing the incorporation of modified nucleotides into cellular nucleic acids. The protein is dTTP/UTP pyrophosphatase of Colwellia psychrerythraea (strain 34H / ATCC BAA-681) (Vibrio psychroerythus).